Consider the following 391-residue polypeptide: NAD(P)H-quinone oxidoreductase subunit H, chloroplastic (391 aa).

Belongs to the complex I 49 kDa subunit family. NDH is composed of at least 16 different subunits, 5 of which are encoded in the nucleus.

It is found in the plastid. It localises to the chloroplast thylakoid membrane. It carries out the reaction a plastoquinone + NADH + (n+1) H(+)(in) = a plastoquinol + NAD(+) + n H(+)(out). The enzyme catalyses a plastoquinone + NADPH + (n+1) H(+)(in) = a plastoquinol + NADP(+) + n H(+)(out). In terms of biological role, NDH shuttles electrons from NAD(P)H:plastoquinone, via FMN and iron-sulfur (Fe-S) centers, to quinones in the photosynthetic chain and possibly in a chloroplast respiratory chain. The immediate electron acceptor for the enzyme in this species is believed to be plastoquinone. Couples the redox reaction to proton translocation, and thus conserves the redox energy in a proton gradient. This Physcomitrium patens (Spreading-leaved earth moss) protein is NAD(P)H-quinone oxidoreductase subunit H, chloroplastic.